Here is a 384-residue protein sequence, read N- to C-terminus: UDP-N-acetylglucosamine--N-acetylmuramyl-(pentapeptide) pyrophosphoryl-undecaprenol N-acetylglucosamine transferase (384 aa).

UDP-N-acetyl-alpha-D-glucosamine contacts are provided by residues 22–24 (TGG), arginine 179, serine 209, and glutamine 312.

The protein belongs to the glycosyltransferase 28 family. MurG subfamily.

The protein localises to the cell inner membrane. The catalysed reaction is di-trans,octa-cis-undecaprenyl diphospho-N-acetyl-alpha-D-muramoyl-L-alanyl-D-glutamyl-meso-2,6-diaminopimeloyl-D-alanyl-D-alanine + UDP-N-acetyl-alpha-D-glucosamine = di-trans,octa-cis-undecaprenyl diphospho-[N-acetyl-alpha-D-glucosaminyl-(1-&gt;4)]-N-acetyl-alpha-D-muramoyl-L-alanyl-D-glutamyl-meso-2,6-diaminopimeloyl-D-alanyl-D-alanine + UDP + H(+). It functions in the pathway cell wall biogenesis; peptidoglycan biosynthesis. In terms of biological role, cell wall formation. Catalyzes the transfer of a GlcNAc subunit on undecaprenyl-pyrophosphoryl-MurNAc-pentapeptide (lipid intermediate I) to form undecaprenyl-pyrophosphoryl-MurNAc-(pentapeptide)GlcNAc (lipid intermediate II). The protein is UDP-N-acetylglucosamine--N-acetylmuramyl-(pentapeptide) pyrophosphoryl-undecaprenol N-acetylglucosamine transferase of Treponema pallidum (strain Nichols).